A 513-amino-acid chain; its full sequence is Mannan endo-1,4-beta-mannosidase A and B (513 aa).

The first 26 residues, 1–26 (MKVYKKVAFVMAFIMFFSVLPTISMS), serve as a signal peptide directing secretion. One can recognise a GH26 domain in the interval 41 to 353 (QTTKNVYSWL…FNDSWVVNRG (313 aa)). Substrate is bound at residue His132. Catalysis depends on Glu195, which acts as the Proton donor. 2 residues coordinate substrate: Trp200 and Tyr270. Residue Glu295 is the Nucleophile of the active site. Position 429 to 430 (429 to 430 (IK)) interacts with substrate.

Belongs to the glycosyl hydrolase 26 family.

It localises to the secreted. The catalysed reaction is Random hydrolysis of (1-&gt;4)-beta-D-mannosidic linkages in mannans, galactomannans and glucomannans.. In terms of biological role, could be involved in the degradation of glucomannan and catalyzes the endo hydrolysis of beta-1,4-linked mannan, galactomannan and glucomannan. The chain is Mannan endo-1,4-beta-mannosidase A and B from Caldalkalibacillus mannanilyticus (strain DSM 16130 / CIP 109019 / JCM 10596 / AM-001) (Bacillus mannanilyticus).